The chain runs to 155 residues: DNA polymerase epsilon subunit 4 (155 aa).

Composition is skewed to acidic residues over residues 1 to 16 (MASE…EEQD) and 24 to 48 (ETEE…DNPE). The tract at residues 1–76 (MASEELFEAE…APADNEAKMT (76 aa)) is disordered. A compositionally biased stretch (polar residues) spans 49 to 65 (AESTTEQLTEKPVTNGN).

In terms of assembly, component of the DNA polymerase epsilon complex consisting of four subunits: the catalytic subunit PolE1/DNApol-epsilon255 and the accessory subunits PolE2/DNApol-epsilon58, Chrac-14/DNApolE3 and PolE4/Mes4.

Its subcellular location is the nucleus. Functionally, accessory component of the DNA polymerase epsilon complex. Participates in DNA repair and in chromosomal DNA replication. Has a role in cell cycle progression. Required for wing morphogenesis. This is DNA polymerase epsilon subunit 4 from Drosophila melanogaster (Fruit fly).